The sequence spans 67 residues: ATP synthase protein 8 (67 aa).

Residues 8 to 24 (TWFTTVLSTTITLFILM) form a helical membrane-spanning segment. K54 is subject to N6-acetyllysine; alternate. K54 carries the N6-succinyllysine; alternate modification. N6-acetyllysine is present on K57.

This sequence belongs to the ATPase protein 8 family. F-type ATPases have 2 components, CF(1) - the catalytic core - and CF(0) - the membrane proton channel. Component of an ATP synthase complex composed of ATP5PB, ATP5MC1, ATP5F1E, ATP5PD, ATP5ME, ATP5PF, ATP5MF, MT-ATP6, MT-ATP8, ATP5F1A, ATP5F1B, ATP5F1D, ATP5F1C, ATP5PO, ATP5MG, ATP5MK and ATP5MJ. Interacts with PRICKLE3.

The protein resides in the mitochondrion membrane. Functionally, mitochondrial membrane ATP synthase (F(1)F(0) ATP synthase or Complex V) produces ATP from ADP in the presence of a proton gradient across the membrane which is generated by electron transport complexes of the respiratory chain. F-type ATPases consist of two structural domains, F(1) - containing the extramembraneous catalytic core and F(0) - containing the membrane proton channel, linked together by a central stalk and a peripheral stalk. During catalysis, ATP synthesis in the catalytic domain of F(1) is coupled via a rotary mechanism of the central stalk subunits to proton translocation. Part of the complex F(0) domain. Minor subunit located with subunit a in the membrane. The polypeptide is ATP synthase protein 8 (MT-ATP8) (Microtus pennsylvanicus (Meadow vole)).